We begin with the raw amino-acid sequence, 919 residues long: Glutamate receptor ionotropic, kainate 3 (919 aa).

A signal peptide spans 1–31; that stretch reads MTAPWRRLRSLVWEYWAGFLVCAFWIPDSRG. Over 32-563 the chain is Extracellular; the sequence is MPHVIRIGGI…VFSFLNPLSP (532 aa). 7 N-linked (GlcNAc...) asparagine glycosylation sites follow: asparagine 70, asparagine 76, asparagine 278, asparagine 381, asparagine 415, asparagine 426, and asparagine 433. Cysteine 99 and cysteine 350 form a disulfide bridge. 3 residues coordinate L-glutamate: proline 518, threonine 520, and arginine 525. N-linked (GlcNAc...) asparagine glycosylation is found at asparagine 548 and asparagine 551. Residues 564-584 form a helical membrane-spanning segment; it reads DIWMYVLLAYLGVSCVLFVIA. Topologically, residues 585-636 are cytoplasmic; sequence RFSPYEWYDAHPCNPGSEVVENNFTLLNSFWFGMGSLMQQGSELMPKALSTR. A helical membrane pass occupies residues 637-657; the sequence is IIGGIWWFFTLIIISSYTANL. Residues 658–820 lie on the Extracellular side of the membrane; it reads AAFLTVERME…KEASALGIQK (163 aa). L-glutamate-binding residues include alanine 691, threonine 692, and glutamate 739. N-linked (GlcNAc...) asparagine glycosylation is present at asparagine 752. A helical transmembrane segment spans residues 821-841; the sequence is IGGIFIVLAAGLVLSVLVAVG. The Cytoplasmic portion of the chain corresponds to 842 to 919; sequence EFIYKLRKTA…CSTSLAPVFP (78 aa). Serine 869 carries the phosphoserine modification. Residue lysine 887 forms a Glycyl lysine isopeptide (Lys-Gly) (interchain with G-Cter in SUMO1) linkage.

It belongs to the glutamate-gated ion channel (TC 1.A.10.1) family. GRIK3 subfamily. In terms of assembly, homotetramer, and heterotetramer with GRIK4 or GRIK5. Can form functional heteromeric receptors with GRIK2. Interacts with PRKCABP. Interacts with NETO2. Homomeric GluR7A forms functional kainate receptors which have very low sensitivity to glutamate. Can form functional heteromeric receptors with GRIK4 and GRIK5. As to quaternary structure, homomeric GluR7B forms functional kainate receptors. In terms of processing, mass spectrometry data suggest the protein is N-glycosylated at five distinct sites. Expressed in the olfactory bulb (at protein level). Expressed in the deep cortical layers, dentate gyrus, reticular thalamic nucleus, mammillary bodies, pons, and cerebellum of the adult.

The protein localises to the cell membrane. It localises to the postsynaptic cell membrane. The enzyme catalyses Ca(2+)(in) = Ca(2+)(out). Its function is as follows. Ionotropic glutamate receptor that functions as a cation-permeable ligand-gated ion channel, gated by L-glutamate and the glutamatergic agonist kainic acid. Binding of the excitatory neurotransmitter L-glutamate induces a conformation change, leading to the opening of the cation channel, and thereby converts the chemical signal to an electrical impulse. The receptor then desensitizes rapidly and enters a transient inactive state, characterized by the presence of bound agonist. In association with GRIK2, involved in presynaptic facilitation of glutamate release at hippocampal mossy fiber synapses. Functionally, ionotropic glutamate receptor that functions as a ligand-gated cation channel, gated by L-glutamate and the glutamatergic agonist kainic acid. In Rattus norvegicus (Rat), this protein is Glutamate receptor ionotropic, kainate 3 (Grik3).